The following is a 418-amino-acid chain: Beta-arrestin-1 (418 aa).

Residues 1 to 163 are interaction with SRC; sequence MGDKGTRVFK…LEEKIHKRNS (163 aa). The interaction with CHRM2 stretch occupies residues 45 to 86; that stretch reads PEYLKERRVYVTLTCAFRYGREDLDVLGLTFRKDLFVANVQS. Tyrosine 47 bears the Phosphotyrosine mark. Positions 250, 255, 324, and 326 each coordinate 1D-myo-inositol hexakisphosphate. Residues 318–418 are interaction with TRAF6; the sequence is IVSYKVKVKL…GTGSPRLNDR (101 aa). The tract at residues 353 to 375 is disordered; it reads HPKPKEEPPHREVPEHETPVDTN. A compositionally biased stretch (basic and acidic residues) spans 355–371; sequence KPKEEPPHREVPEHETP. Positions 385–395 match the [DE]-X(1,2)-F-X-X-[FL]-X-X-X-R motif motif; that stretch reads DIVFEDFARQR. A disordered region spans residues 397–418; that stretch reads KGMKDDKEEEEDGTGSPRLNDR. A Phosphoserine; by GRK5 modification is found at serine 412.

The protein belongs to the arrestin family. In terms of assembly, monomer. Homodimer. Homooligomer; the self-association is mediated by InsP6-binding. Heterooligomer with ARRB2; the association is mediated by InsP6-binding. Interacts with ADRB2 (phosphorylated). Interacts with CHRM2 (phosphorylated). Interacts with LHCGR. Interacts with CYTH2 and CASR. Interacts with AP2B1 (dephosphorylated at 'Tyr-737'); phosphorylation of AP2B1 at 'Tyr-737' disrupts the interaction. Interacts (dephosphorylated at Ser-412) with CLTC. Interacts with CCR2 and GRK2. Interacts with CRR5. Interacts with PTAFR (phosphorylated on serine residues). Interacts with CLTC and MAP2K3. Interacts with CREB1. Interacts with TRAF6. Interacts with IGF1R and MDM2. Interacts with C5AR1. Interacts with PDE4D. Interacts with SRC (via the SH3 domain and the protein kinase domain); the interaction is independent of the phosphorylation state of SRC C-terminus. Interacts with TACR1. Interacts with RAF1. Interacts with CHUK, IKBKB and MAP3K14. Interacts with DVL1; the interaction is enhanced by phosphorylation of DVL1. Interacts with DVL2; the interaction is enhanced by phosphorylation of DVL2. Interacts with IGF1R. Associates with MAP kinase p38. Part of a MAPK signaling complex consisting of TACR1, ARRB1, SRC, MAPK1 (activated) and MAPK3 (activated). Part of a MAPK signaling complex consisting of F2RL1, ARRB1, RAF1, MAPK1 (activated) and MAPK3 (activated). Interacts with GPR143. Interacts with MAP2K4/MKK4. Interacts with HCK and CXCR1 (phosphorylated). Interacts with ACKR3 and ACKR4. Interacts with ARRDC1; the interaction is direct. Interacts with GPR61, GPR62 and GPR135. Constitutively phosphorylated at Ser-412 in the cytoplasm. At the plasma membrane, is rapidly dephosphorylated, a process that is required for clathrin binding and ADRB2 endocytosis but not for ADRB2 binding and desensitization. Once internalized, is rephosphorylated. Post-translationally, the ubiquitination status appears to regulate the formation and trafficking of beta-arrestin-GPCR complexes and signaling. Ubiquitination appears to occur GPCR-specific. Ubiquitinated by MDM2; the ubiquitination is required for rapid internalization of ADRB2. Deubiquitinated by USP33; the deubiquitination leads to a dissociation of the beta-arrestin-GPCR complex. Stimulation of a class A GPCR, such as ADRB2, induces transient ubiquitination and subsequently promotes association with USP33. As to expression, beta-arrestin 1A is found in cortex, cerebellum, striatum, pineal gland, retina and heart. Beta-arrestin 1B is found in spleen, lung, pituitary and kidney.

The protein localises to the cytoplasm. The protein resides in the nucleus. It localises to the cell membrane. Its subcellular location is the membrane. It is found in the clathrin-coated pit. The protein localises to the cell projection. The protein resides in the pseudopodium. It localises to the cytoplasmic vesicle. Functions in regulating agonist-mediated G-protein coupled receptor (GPCR) signaling by mediating both receptor desensitization and resensitization processes. During homologous desensitization, beta-arrestins bind to the GPRK-phosphorylated receptor and sterically preclude its coupling to the cognate G-protein; the binding appears to require additional receptor determinants exposed only in the active receptor conformation. The beta-arrestins target many receptors for internalization by acting as endocytic adapters (CLASPs, clathrin-associated sorting proteins) and recruiting the GPRCs to the adapter protein 2 complex 2 (AP-2) in clathrin-coated pits (CCPs). However, the extent of beta-arrestin involvement appears to vary significantly depending on the receptor, agonist and cell type. Internalized arrestin-receptor complexes traffic to intracellular endosomes, where they remain uncoupled from G-proteins. Two different modes of arrestin-mediated internalization occur. Class A receptors, like ADRB2, OPRM1, ENDRA, D1AR and ADRA1B dissociate from beta-arrestin at or near the plasma membrane and undergo rapid recycling. Class B receptors, like AVPR2, AGTR1, NTSR1, TRHR and TACR1 internalize as a complex with arrestin and traffic with it to endosomal vesicles, presumably as desensitized receptors, for extended periods of time. Receptor resensitization then requires that receptor-bound arrestin is removed so that the receptor can be dephosphorylated and returned to the plasma membrane. Involved in internalization of P2RY4 and UTP-stimulated internalization of P2RY2. Involved in phosphorylation-dependent internalization of OPRD1 ands subsequent recycling. Involved in the degradation of cAMP by recruiting cAMP phosphodiesterases to ligand-activated receptors. Beta-arrestins function as multivalent adapter proteins that can switch the GPCR from a G-protein signaling mode that transmits short-lived signals from the plasma membrane via small molecule second messengers and ion channels to a beta-arrestin signaling mode that transmits a distinct set of signals that are initiated as the receptor internalizes and transits the intracellular compartment. Acts as a signaling scaffold for MAPK pathways such as MAPK1/3 (ERK1/2). ERK1/2 activated by the beta-arrestin scaffold is largely excluded from the nucleus and confined to cytoplasmic locations such as endocytic vesicles, also called beta-arrestin signalosomes. Recruits c-Src/SRC to ADRB2 resulting in ERK activation. GPCRs for which the beta-arrestin-mediated signaling relies on both ARRB1 and ARRB2 (codependent regulation) include ADRB2, F2RL1 and PTH1R. For some GPCRs the beta-arrestin-mediated signaling relies on either ARRB1 or ARRB2 and is inhibited by the other respective beta-arrestin form (reciprocal regulation). Inhibits ERK1/2 signaling in AGTR1- and AVPR2-mediated activation (reciprocal regulation). Is required for SP-stimulated endocytosis of NK1R and recruits c-Src/SRC to internalized NK1R resulting in ERK1/2 activation, which is required for the antiapoptotic effects of SP. Is involved in proteinase-activated F2RL1-mediated ERK activity. Acts as a signaling scaffold for the AKT1 pathway. Is involved in alpha-thrombin-stimulated AKT1 signaling. Is involved in IGF1-stimulated AKT1 signaling leading to increased protection from apoptosis. Involved in activation of the p38 MAPK signaling pathway and in actin bundle formation. Involved in F2RL1-mediated cytoskeletal rearrangement and chemotaxis. Involved in AGTR1-mediated stress fiber formation by acting together with GNAQ to activate RHOA. Appears to function as signaling scaffold involved in regulation of MIP-1-beta-stimulated CCR5-dependent chemotaxis. Involved in attenuation of NF-kappa-B-dependent transcription in response to GPCR or cytokine stimulation by interacting with and stabilizing CHUK. May serve as nuclear messenger for GPCRs. Involved in OPRD1-stimulated transcriptional regulation by translocating to CDKN1B and FOS promoter regions and recruiting EP300 resulting in acetylation of histone H4. Involved in regulation of LEF1 transcriptional activity via interaction with DVL1 and/or DVL2 Also involved in regulation of receptors other than GPCRs. Involved in Toll-like receptor and IL-1 receptor signaling through the interaction with TRAF6 which prevents TRAF6 autoubiquitination and oligomerization required for activation of NF-kappa-B and JUN. Involved in IL8-mediated granule release in neutrophils. Binds phosphoinositides. Binds inositol hexakisphosphate (InsP6). Required for atypical chemokine receptor ACKR2-induced RAC1-LIMK1-PAK1-dependent phosphorylation of cofilin (CFL1) and for the up-regulation of ACKR2 from endosomal compartment to cell membrane, increasing its efficiency in chemokine uptake and degradation. Involved in the internalization of the atypical chemokine receptor ACKR3. Negatively regulates the NOTCH signaling pathway by mediating the ubiquitination and degradation of NOTCH1 by ITCH. Participates in the recruitment of the ubiquitin-protein ligase to the receptor. This is Beta-arrestin-1 (ARRB1) from Bos taurus (Bovine).